Consider the following 70-residue polypeptide: Cytochrome c oxidase subunit 8B, mitochondrial (70 aa).

A mitochondrion-targeting transit peptide spans 1 to 24 (MSRLAPPLRLLQAPLKCWAVPKAH). The Mitochondrial matrix segment spans residues 25–35 (VSAKPARTPTS). Residues 36-59 (PMEQAVGLSVMFVSFLVPSGWVLS) form a helical membrane-spanning segment. Over 60–70 (HLESYKKSSTT) the chain is Mitochondrial intermembrane.

Belongs to the cytochrome c oxidase VIII family. In terms of assembly, component of the cytochrome c oxidase (complex IV, CIV), a multisubunit enzyme composed of 14 subunits. The complex is composed of a catalytic core of 3 subunits MT-CO1, MT-CO2 and MT-CO3, encoded in the mitochondrial DNA, and 11 supernumerary subunits COX4I, COX5A, COX5B, COX6A, COX6B, COX6C, COX7A, COX7B, COX7C, COX8 and NDUFA4, which are encoded in the nuclear genome. The complex exists as a monomer or a dimer and forms supercomplexes (SCs) in the inner mitochondrial membrane with NADH-ubiquinone oxidoreductase (complex I, CI) and ubiquinol-cytochrome c oxidoreductase (cytochrome b-c1 complex, complex III, CIII), resulting in different assemblies (supercomplex SCI(1)III(2)IV(1) and megacomplex MCI(2)III(2)IV(2)).

The protein resides in the mitochondrion inner membrane. The protein operates within energy metabolism; oxidative phosphorylation. In terms of biological role, component of the cytochrome c oxidase, the last enzyme in the mitochondrial electron transport chain which drives oxidative phosphorylation. The respiratory chain contains 3 multisubunit complexes succinate dehydrogenase (complex II, CII), ubiquinol-cytochrome c oxidoreductase (cytochrome b-c1 complex, complex III, CIII) and cytochrome c oxidase (complex IV, CIV), that cooperate to transfer electrons derived from NADH and succinate to molecular oxygen, creating an electrochemical gradient over the inner membrane that drives transmembrane transport and the ATP synthase. Cytochrome c oxidase is the component of the respiratory chain that catalyzes the reduction of oxygen to water. Electrons originating from reduced cytochrome c in the intermembrane space (IMS) are transferred via the dinuclear copper A center (CU(A)) of subunit 2 and heme A of subunit 1 to the active site in subunit 1, a binuclear center (BNC) formed by heme A3 and copper B (CU(B)). The BNC reduces molecular oxygen to 2 water molecules using 4 electrons from cytochrome c in the IMS and 4 protons from the mitochondrial matrix. This is Cytochrome c oxidase subunit 8B, mitochondrial (COX8B) from Carlito syrichta (Philippine tarsier).